The sequence spans 256 residues: Small ribosomal subunit protein eS1 (256 aa).

Residues 1-18 are compositionally biased toward basic residues; sequence MAVGKNKRLSKGKKGIKK. The segment at 1–20 is disordered; sequence MAVGKNKRLSKGKKGIKKRT. Position 2 is an N-acetylalanine; partial (A2).

The protein belongs to the eukaryotic ribosomal protein eS1 family. As to quaternary structure, component of the small ribosomal subunit. Mature ribosomes consist of a small (40S) and a large (60S) subunit. The 40S subunit contains about 33 different proteins and 1 molecule of RNA (18S). The 60S subunit contains about 49 different proteins and 3 molecules of RNA (25S, 5.8S and 5S).

Its subcellular location is the cytoplasm. The polypeptide is Small ribosomal subunit protein eS1 (rps1) (Emericella nidulans (strain FGSC A4 / ATCC 38163 / CBS 112.46 / NRRL 194 / M139) (Aspergillus nidulans)).